The chain runs to 212 residues: Methylthioribulose-1-phosphate dehydratase (212 aa).

Zn(2+) is bound by residues His97 and His99.

The protein belongs to the aldolase class II family. MtnB subfamily. In terms of assembly, homotetramer. Requires Zn(2+) as cofactor.

The enzyme catalyses 5-(methylsulfanyl)-D-ribulose 1-phosphate = 5-methylsulfanyl-2,3-dioxopentyl phosphate + H2O. Its pathway is amino-acid biosynthesis; L-methionine biosynthesis via salvage pathway; L-methionine from S-methyl-5-thio-alpha-D-ribose 1-phosphate: step 2/6. Catalyzes the dehydration of methylthioribulose-1-phosphate (MTRu-1-P) into 2,3-diketo-5-methylthiopentyl-1-phosphate (DK-MTP-1-P). The polypeptide is Methylthioribulose-1-phosphate dehydratase (Bacillus cereus (strain G9842)).